A 289-amino-acid polypeptide reads, in one-letter code: Tumor necrosis factor receptor superfamily member 5 (289 aa).

An N-terminal signal peptide occupies residues 1 to 19; it reads MVSLPRLCALWGCLLTAVH. At 20–193 the chain is on the extracellular side; sequence LGQCVTCSDK…VICGLKSRMR (174 aa). TNFR-Cys repeat units follow at residues 25–60, 61–103, 104–144, and 145–187; these read TCSD…TQCH, PCDS…DTVC, TCKE…TVCH, and PCPV…VICG. 8 disulfides stabilise this stretch: cysteine 26/cysteine 37, cysteine 38/cysteine 51, cysteine 41/cysteine 59, cysteine 62/cysteine 77, cysteine 83/cysteine 103, cysteine 105/cysteine 119, cysteine 111/cysteine 116, and cysteine 125/cysteine 143. A glycan (N-linked (GlcNAc...) asparagine) is linked at asparagine 153. A helical transmembrane segment spans residues 194–215; the sequence is ALLVIPVVMGILITIFGVFLYI. Topologically, residues 216–289 are cytoplasmic; it reads KKVVKKPKDN…TDSIALRPLV (74 aa). The interval 228-251 is disordered; it reads LPPAARRQDPQEMEDYPGHNTAAP.

In terms of assembly, monomer and homodimer. Interacts with TRAF1, TRAF2 and TRAF6. Interacts with TRAF3 and TRAF5. Interacts with TRAF6 and MAP3K8; the interaction is required for ERK activation.

The protein resides in the cell membrane. Its subcellular location is the secreted. In terms of biological role, receptor for TNFSF5/CD40LG. Transduces TRAF6- and MAP3K8-mediated signals that activate ERK in macrophages and B cells, leading to induction of immunoglobulin secretion. The protein is Tumor necrosis factor receptor superfamily member 5 (Cd40) of Mus musculus (Mouse).